Here is a 367-residue protein sequence, read N- to C-terminus: Alanine racemase (367 aa).

Lys-40 functions as the Proton acceptor; specific for D-alanine in the catalytic mechanism. The residue at position 40 (Lys-40) is an N6-(pyridoxal phosphate)lysine. Arg-136 contributes to the substrate binding site. Tyr-263 (proton acceptor; specific for L-alanine) is an active-site residue. Met-310 contributes to the substrate binding site.

Belongs to the alanine racemase family. The cofactor is pyridoxal 5'-phosphate.

It catalyses the reaction L-alanine = D-alanine. The protein operates within amino-acid biosynthesis; D-alanine biosynthesis; D-alanine from L-alanine: step 1/1. Its function is as follows. Catalyzes the interconversion of L-alanine and D-alanine. May also act on other amino acids. The protein is Alanine racemase (alr) of Streptococcus thermophilus (strain ATCC BAA-250 / LMG 18311).